Consider the following 596-residue polypeptide: Chaperone protein DnaK (596 aa).

The residue at position 174 (Thr174) is a Phosphothreonine; by autocatalysis. The disordered stretch occupies residues 576 to 596 (ANATKDQSSKDQEEVATVVEE).

Belongs to the heat shock protein 70 family.

Its function is as follows. Acts as a chaperone. This Mycoplasmopsis synoviae (strain 53) (Mycoplasma synoviae) protein is Chaperone protein DnaK.